We begin with the raw amino-acid sequence, 174 residues long: Keratin-associated protein 1-5 (174 aa).

Residues 3 to 172 are 15 X 5 AA repeats of C-C-[QEPVRC]-[TPIVLE]-[SRHVP]; sequence CCQTSFCGYP…CCRPVCCCEP (170 aa).

It belongs to the KRTAP type 1 family. In terms of assembly, interacts with hair keratins. As to expression, expressed in the middle/upper portions of the hair cortex, in the region termed the keratogenous zone.

In terms of biological role, in the hair cortex, hair keratin intermediate filaments are embedded in an interfilamentous matrix, consisting of hair keratin-associated proteins (KRTAP), which are essential for the formation of a rigid and resistant hair shaft through their extensive disulfide bond cross-linking with abundant cysteine residues of hair keratins. The matrix proteins include the high-sulfur and high-glycine-tyrosine keratins. This is Keratin-associated protein 1-5 (KRTAP1-5) from Homo sapiens (Human).